We begin with the raw amino-acid sequence, 551 residues long: Cation/acetate symporter ActP (551 aa).

14 helical membrane passes run 5-25 (HWSA…ALTG), 34-54 (IQAI…TYWA), 77-97 (GLAI…SALV), 104-124 (GLIY…LIAE), 150-170 (LSAC…MVGA), 184-204 (VAVV…GMLA), 207-227 (WVQI…AIMV), 263-283 (ISAL…PHIL), 304-324 (GFIG…ILLV), 356-376 (FFLG…VAGL), 406-426 (VSKI…ILFE), 430-450 (IAFM…PIII), 469-489 (LGLS…VTIL), and 498-518 (YEYP…FFSI).

This sequence belongs to the sodium:solute symporter (SSF) (TC 2.A.21) family.

It localises to the cell inner membrane. In terms of biological role, transports acetate. The sequence is that of Cation/acetate symporter ActP from Yersinia pestis bv. Antiqua (strain Antiqua).